The following is a 147-amino-acid chain: MSDYFEELGHEPTGPLGANDLARNLKRLQVLAIMNGIDMEIEVPEASKRAILELPVHEIVKSDEGGDLECSVCKEPAEEGQKYRILPCKHEFHEECILLWLKKTNSCPLCRYELETDDPVYEELRRFRQDEANRRERENTLLDSMFG.

Residues 70-111 form an RING-type; atypical zinc finger; that stretch reads CSVCKEPAEEGQKYRILPCKHEFHEECILLWLKKTNSCPLCR.

The protein belongs to the RNF181 family.

It carries out the reaction S-ubiquitinyl-[E2 ubiquitin-conjugating enzyme]-L-cysteine + [acceptor protein]-L-lysine = [E2 ubiquitin-conjugating enzyme]-L-cysteine + N(6)-ubiquitinyl-[acceptor protein]-L-lysine.. It participates in protein modification; protein ubiquitination. In terms of biological role, E3 ubiquitin-protein ligase which accepts ubiquitin from an E2 ubiquitin-conjugating enzyme in the form of a thioester and then directly transfers the ubiquitin to targeted substrates. The protein is E3 ubiquitin-protein ligase RNF181 homolog of Drosophila melanogaster (Fruit fly).